Consider the following 54-residue polypeptide: Apelin receptor early endogenous ligand (54 aa).

An N-terminal signal peptide occupies residues 1 to 22 (MRFQQFLFAFFIFIMSLLLISG). N27 is a glycosylation site (N-linked (GlcNAc...) asparagine).

This sequence belongs to the Elabela/Toddler family. As to quaternary structure, interacts with APLNR. As to expression, expressed in the intima of blood vessels. Expressed in endothelial cells in blood vessels in the heart and lung. Expressed in cytotrophoblasts and syncytiotrophoblasts of first-trimester placental tissue and term placentas (at protein level). Not detected in smooth muscle cells or cardiomyocytes (at protein level). Expressed in kidney. Expressed in blood vessels. Expressed in embryonic (ESCs) and induced (iPSCs) pluripotent stem cells. Most highly expressed in undifferentiated embryonic stem cell and is rapidly down-regulated during differentiation.

The protein resides in the secreted. It localises to the extracellular space. Its function is as follows. Peptide hormone that functions as endogenous ligand for the G-protein-coupled apelin receptor (APLNR/APJ), that plays a role in the regulation of normal cardiovascular function and fluid homeostasis. Functions as a balanced agonist activating both G(i) protein pathway and beta-arrestin pathway of APLNR. Downstream G proteins activation, apelin can inhibit cAMP production and activate key intracellular effectors such as ERKs. On the other hand, APLNR activation induces beta-arrestin recruitment to the membrane leading to desensitization and internalization of the receptor. Required for mesendodermal differentiation, blood vessels formation and heart morphogenesis during early development and for adult cardiovascular homeostasis. Acts as a motogen by promoting mesendodermal cell migration during gastrulation by binding and activating APLNR. Acts as an early embryonic regulator of cellular movement with a role in migration and development of cardiac progenitor cells. May act as a chemoattractant for the activation of angioblast migration toward the embryonic midline, i.e. the position of the future vessel formation, during vasculogenesis. Positively regulates sinus venosus (SV)-derived endothelial cells migration into the developing heart to promote coronary blood vessel sprouting. Plays a role in placental vascular development; promotes placental trophoblast invasion and spiral artery remodeling in the uterus. Involved in the regulation of maternal cardiovascular homeostasis to prevent gestational hypertension and for potent cardioprotective functions during heart failure. Mediates myocardial contractility in an ERK1/2-dependent manner. This chain is Apelin receptor early endogenous ligand, found in Homo sapiens (Human).